A 587-amino-acid chain; its full sequence is Arginine--tRNA ligase (587 aa).

Residues 126–136 (ANPTGPLHVGH) carry the 'HIGH' region motif.

Belongs to the class-I aminoacyl-tRNA synthetase family. Monomer.

It localises to the cytoplasm. The catalysed reaction is tRNA(Arg) + L-arginine + ATP = L-arginyl-tRNA(Arg) + AMP + diphosphate. The protein is Arginine--tRNA ligase of Azoarcus sp. (strain BH72).